We begin with the raw amino-acid sequence, 436 residues long: CaM kinase-like vesicle-associated protein (436 aa).

The 263-residue stretch at 24-286 (YDLGQIVKSE…AQEAINHEWI (263 aa)) folds into the Protein kinase domain. A disordered region spans residues 328-436 (APENQTAAAT…ALDTVEEQSG (109 aa)). A compositionally biased stretch (low complexity) spans 333 to 409 (TAAATAPAAE…QPPAEPVVHV (77 aa)).

This sequence belongs to the protein kinase superfamily. CAMK Ser/Thr protein kinase family. As to quaternary structure, interacts with calmodulin, in the presence of calcium. It depends on Ca(2+) as a cofactor.

The protein resides in the cytoplasmic vesicle membrane. Functionally, does not appear to have detectable kinase activity. The chain is CaM kinase-like vesicle-associated protein (camkv) from Danio rerio (Zebrafish).